Here is a 497-residue protein sequence, read N- to C-terminus: uncharacterized protein (497 aa).

Over residues 1-16 (MSTTTETVTWSQYKPQ) the composition is skewed to polar residues. Residues 1–29 (MSTTTETVTWSQYKPQETQRRLSRSSTIT) are disordered. Position 64 is a phosphoserine (Ser-64). The next 6 helical transmembrane spans lie at 86-106 (IALV…ALPI), 120-140 (FSGL…YPML), 155-175 (FRPL…YSLA), 180-200 (WLYL…MFLY), 222-242 (LNIL…GILA), and 258-278 (AGSW…SIFF). At Ser-295 the chain carries Phosphoserine. Helical transmembrane passes span 309–329 (FMLC…AGYQ), 348–368 (GNFL…STFL), 377–397 (IMLY…VLDA), 407–427 (FVLY…LVSL), 443–463 (VVQV…GAIF), and 468–488 (VGFI…LLYL).

It localises to the membrane. This is an uncharacterized protein from Schizosaccharomyces pombe (strain 972 / ATCC 24843) (Fission yeast).